Consider the following 41-residue polypeptide: Photosystem I reaction center subunit IX (41 aa).

A helical membrane pass occupies residues 7-27 (YLSSAPILATIWFAITAGILI).

Belongs to the PsaJ family.

The protein resides in the cellular thylakoid membrane. Its function is as follows. May help in the organization of the PsaE and PsaF subunits. The polypeptide is Photosystem I reaction center subunit IX (Synechococcus sp. (strain ATCC 27144 / PCC 6301 / SAUG 1402/1) (Anacystis nidulans)).